A 258-amino-acid polypeptide reads, in one-letter code: Small ribosomal subunit protein uS2 (258 aa).

It belongs to the universal ribosomal protein uS2 family.

The protein is Small ribosomal subunit protein uS2 of Granulibacter bethesdensis (strain ATCC BAA-1260 / CGDNIH1).